Reading from the N-terminus, the 98-residue chain is Acylphosphatase (98 aa).

Residues 12-98 form the Acylphosphatase-like domain; the sequence is TYYVRVRGVV…DKRFERFQQH (87 aa). Active-site residues include Arg-27 and Asn-45.

Belongs to the acylphosphatase family.

The enzyme catalyses an acyl phosphate + H2O = a carboxylate + phosphate + H(+). The protein is Acylphosphatase (acyP) of Burkholderia mallei (strain NCTC 10247).